Here is a 940-residue protein sequence, read N- to C-terminus: Isoleucine--tRNA ligase (940 aa).

The 'HIGH' region motif lies at 58-68 (PYANGAIHIGH). E564 is an L-isoleucyl-5'-AMP binding site. The 'KMSKS' region motif lies at 605–609 (KMSKS). K608 contacts ATP. Zn(2+) is bound by residues C903, C906, C923, and C926.

This sequence belongs to the class-I aminoacyl-tRNA synthetase family. IleS type 1 subfamily. Monomer. Requires Zn(2+) as cofactor.

It is found in the cytoplasm. It carries out the reaction tRNA(Ile) + L-isoleucine + ATP = L-isoleucyl-tRNA(Ile) + AMP + diphosphate. Functionally, catalyzes the attachment of isoleucine to tRNA(Ile). As IleRS can inadvertently accommodate and process structurally similar amino acids such as valine, to avoid such errors it has two additional distinct tRNA(Ile)-dependent editing activities. One activity is designated as 'pretransfer' editing and involves the hydrolysis of activated Val-AMP. The other activity is designated 'posttransfer' editing and involves deacylation of mischarged Val-tRNA(Ile). The chain is Isoleucine--tRNA ligase from Nitrosococcus oceani (strain ATCC 19707 / BCRC 17464 / JCM 30415 / NCIMB 11848 / C-107).